The sequence spans 404 residues: Serine/threonine-protein kinase UCN (404 aa).

Residues 22–340 (LKVLKLLGKG…AAEIKEHAFF (319 aa)) enclose the Protein kinase domain. ATP-binding positions include 28 to 36 (LGKGATGTV) and Lys55. Residue Asp153 is the Proton acceptor of the active site. The segment at 185-207 (EFYHLSDPEPDPNPESNLSHNKK) is disordered. Residues 341 to 404 (KGVRWELLTE…CSENNPFVDF (64 aa)) enclose the AGC-kinase C-terminal domain.

This sequence belongs to the protein kinase superfamily. AGC Ser/Thr protein kinase family. As to expression, expressed in the epidermis and cortex of the transition zone of the root apex and developing flowers. Expressed in rosette leaves, stems and siliques.

It localises to the cytoplasm. The protein resides in the nucleus. The catalysed reaction is L-seryl-[protein] + ATP = O-phospho-L-seryl-[protein] + ADP + H(+). The enzyme catalyses L-threonyl-[protein] + ATP = O-phospho-L-threonyl-[protein] + ADP + H(+). Functionally, regulates planar ovule integument development by suppressing aberrantly oriented growth. Maintains planar growth of integuments by repressing the developmental regulator and transcription factor KAN4 which is involved in the control of early integument growth and polarity. Restricts growth in stamen filaments, petals, and cotyledons. The chain is Serine/threonine-protein kinase UCN from Arabidopsis thaliana (Mouse-ear cress).